We begin with the raw amino-acid sequence, 346 residues long: Elongation factor Ts (346 aa).

The involved in Mg(2+) ion dislocation from EF-Tu stretch occupies residues 80–83 (TDFV).

The protein belongs to the EF-Ts family.

Its subcellular location is the cytoplasm. Its function is as follows. Associates with the EF-Tu.GDP complex and induces the exchange of GDP to GTP. It remains bound to the aminoacyl-tRNA.EF-Tu.GTP complex up to the GTP hydrolysis stage on the ribosome. This chain is Elongation factor Ts, found in Streptococcus pyogenes serotype M1.